A 148-amino-acid polypeptide reads, in one-letter code: Large ribosomal subunit protein uL15 (148 aa).

Basic and acidic residues predominate over residues 1–10 (MQLHNLEYKK). The tract at residues 1–42 (MQLHNLEYKKGSRNHKEKRVGRGHGSGLGKTSGRGQDGQKAR) is disordered. Positions 11-22 (GSRNHKEKRVGR) are enriched in basic residues. Residues 23 to 36 (GHGSGLGKTSGRGQ) are compositionally biased toward gly residues.

It belongs to the universal ribosomal protein uL15 family. As to quaternary structure, part of the 50S ribosomal subunit.

In terms of biological role, binds to the 23S rRNA. This Ureaplasma urealyticum serovar 10 (strain ATCC 33699 / Western) protein is Large ribosomal subunit protein uL15.